We begin with the raw amino-acid sequence, 413 residues long: Tyrosine--tRNA ligase (413 aa).

Y34 provides a ligand contact to L-tyrosine. The 'HIGH' region motif lies at 39–48 (PTSHSLTVGH). The L-tyrosine site is built by Y164 and Q168. A 'KMSKS' region motif is present at residues 225–229 (KFGKS). K228 lines the ATP pocket. The 67-residue stretch at 347-413 (ILLVDALVQT…GKKNNALIVF (67 aa)) folds into the S4 RNA-binding domain.

Belongs to the class-I aminoacyl-tRNA synthetase family. TyrS type 1 subfamily. In terms of assembly, homodimer.

It is found in the cytoplasm. It catalyses the reaction tRNA(Tyr) + L-tyrosine + ATP = L-tyrosyl-tRNA(Tyr) + AMP + diphosphate + H(+). Functionally, catalyzes the attachment of tyrosine to tRNA(Tyr) in a two-step reaction: tyrosine is first activated by ATP to form Tyr-AMP and then transferred to the acceptor end of tRNA(Tyr). The chain is Tyrosine--tRNA ligase from Aster yellows witches'-broom phytoplasma (strain AYWB).